The following is a 953-amino-acid chain: Isoleucine--tRNA ligase (953 aa).

Residues 57–67 carry the 'HIGH' region motif; the sequence is PYANGDIHIGH. E582 contributes to the L-isoleucyl-5'-AMP binding site. Residues 623-627 carry the 'KMSKS' region motif; that stretch reads KMSKS. K626 provides a ligand contact to ATP. Residues C916, C919, C936, and C939 each coordinate Zn(2+).

It belongs to the class-I aminoacyl-tRNA synthetase family. IleS type 1 subfamily. As to quaternary structure, monomer. Requires Zn(2+) as cofactor.

The protein resides in the cytoplasm. It catalyses the reaction tRNA(Ile) + L-isoleucine + ATP = L-isoleucyl-tRNA(Ile) + AMP + diphosphate. Functionally, catalyzes the attachment of isoleucine to tRNA(Ile). As IleRS can inadvertently accommodate and process structurally similar amino acids such as valine, to avoid such errors it has two additional distinct tRNA(Ile)-dependent editing activities. One activity is designated as 'pretransfer' editing and involves the hydrolysis of activated Val-AMP. The other activity is designated 'posttransfer' editing and involves deacylation of mischarged Val-tRNA(Ile). In Bordetella bronchiseptica (strain ATCC BAA-588 / NCTC 13252 / RB50) (Alcaligenes bronchisepticus), this protein is Isoleucine--tRNA ligase.